We begin with the raw amino-acid sequence, 496 residues long: Omega-crystallin (496 aa).

Belongs to the aldehyde dehydrogenase family. In terms of tissue distribution, lens.

Omega-crystallins are structural components of squids and octopi eye lens. Contains relatively little if any DHAL activity. This is Omega-crystallin from Enteroctopus dofleini (North Pacific giant octopus).